A 106-amino-acid polypeptide reads, in one-letter code: Large ribosomal subunit protein eL42 (106 aa).

Zn(2+)-binding residues include Cys-12, Cys-17, Cys-74, and Cys-77.

The protein belongs to the eukaryotic ribosomal protein eL42 family. As to quaternary structure, component of the large ribosomal subunit. Mature ribosomes consist of a small (40S) and a large (60S) subunit. The 40S subunit contains about 32 different proteins and 1 molecule of RNA (18S). The 60S subunit contains 45 different proteins and 3 molecules of RNA (25S, 5.8S and 5S). Zn(2+) is required as a cofactor.

Its subcellular location is the cytoplasm. Component of the ribosome, a large ribonucleoprotein complex responsible for the synthesis of proteins in the cell. The small ribosomal subunit (SSU) binds messenger RNAs (mRNAs) and translates the encoded message by selecting cognate aminoacyl-transfer RNA (tRNA) molecules. The large subunit (LSU) contains the ribosomal catalytic site termed the peptidyl transferase center (PTC), which catalyzes the formation of peptide bonds, thereby polymerizing the amino acids delivered by tRNAs into a polypeptide chain. The nascent polypeptides leave the ribosome through a tunnel in the LSU and interact with protein factors that function in enzymatic processing, targeting, and the membrane insertion of nascent chains at the exit of the ribosomal tunnel. In Candida albicans (strain SC5314 / ATCC MYA-2876) (Yeast), this protein is Large ribosomal subunit protein eL42 (RPL44).